The chain runs to 590 residues: Muscarinic acetylcholine receptor M3 (590 aa).

Residues 1–67 (MTLHNNNTTS…DPLGGHTIWQ (67 aa)) lie on the Extracellular side of the membrane. 6 N-linked (GlcNAc...) asparagine glycosylation sites follow: Asn6, Asn7, Asn15, Asn41, Asn48, and Asn53. The helical transmembrane segment at 68–91 (VVFIAFLTGILALVTIIGNILVIV) threads the bilayer. Topologically, residues 92–104 (AFKVNKQLKTVNN) are cytoplasmic. Residues 105–130 (YFLLSLACADLIIGVISMNLFTTYII) form a helical membrane-spanning segment. Residues 131–142 (MNRWALGNLACD) are Extracellular-facing. Cysteines 141 and 221 form a disulfide. The chain crosses the membrane as a helical span at residues 143–164 (LWLSIDYVASNASVMNLLVISF). Residues 165-184 (DRYFSITRPLTYRAKRTTKR) are Cytoplasmic-facing. Residues 185–206 (AGVMIGLAWVISFILWAPAILF) traverse the membrane as a helical segment. Over 207–229 (WQYFVGKRTVPPGECFIQFLSEP) the chain is Extracellular. The helical transmembrane segment at 230 to 252 (TITFGTAIAAFYMPVTIMTILYW) threads the bilayer. Topologically, residues 253–491 (RIYKETEKRT…SLIKEKKAAQ (239 aa)) are cytoplasmic. The short motif at 275–281 (AEAENFV) is the Basolateral sorting signal element. The interval 324 to 357 (AEQMDQDHSSSDSWNNNDAAASLENSASSDEEDI) is disordered. Residues 334 to 345 (SDSWNNNDAAAS) are compositionally biased toward low complexity. Ser385 is modified (phosphoserine). A helical membrane pass occupies residues 492–514 (TLSAILLAFIITWTPYNIMVLVN). Residues 515-526 (TFCDSCIPKTYW) are Extracellular-facing. Cys517 and Cys520 form a disulfide bridge. Residues 527–546 (NLGYWLCYINSTVNPVCYAL) traverse the membrane as a helical segment. The Cytoplasmic segment spans residues 547–590 (CNKTFRTTFKMLLLCQCDKRKRRKQQYQQRQSVIFHKRVPEQAL).

Belongs to the G-protein coupled receptor 1 family. Muscarinic acetylcholine receptor subfamily. CHRM3 sub-subfamily. As to quaternary structure, homodimer; the dimers can form tetramers. Interacts with NALCN. Interacts with TMEM147.

It is found in the cell membrane. Its subcellular location is the postsynaptic cell membrane. The protein localises to the basolateral cell membrane. It localises to the endoplasmic reticulum membrane. In terms of biological role, the muscarinic acetylcholine receptor mediates various cellular responses, including inhibition of adenylate cyclase, breakdown of phosphoinositides and modulation of potassium channels through the action of G proteins. Primary transducing effect is Pi turnover. The protein is Muscarinic acetylcholine receptor M3 (CHRM3) of Sus scrofa (Pig).